Here is a 106-residue protein sequence, read N- to C-terminus: Large ribosomal subunit protein eL42 (106 aa).

Belongs to the eukaryotic ribosomal protein eL42 family.

This chain is Large ribosomal subunit protein eL42 (RPL44), found in Schwanniomyces occidentalis (Yeast).